Here is a 351-residue protein sequence, read N- to C-terminus: Photosystem II D2 protein (351 aa).

The helical transmembrane segment at 39–59 (CAYLAVGGWLTGTTFVTSWYT) threads the bilayer. Position 116 (His116) interacts with chlorophyll a. Residues 123 to 139 (GFCLRQFEIARLVGLRP) traverse the membrane as a helical segment. 2 residues coordinate pheophytin a: Gln128 and Asn141. Residues 151–164 (VFVSVFLMYPLGQA) traverse the membrane as a helical segment. Chlorophyll a is bound at residue His196. A helical transmembrane segment spans residues 206–226 (GALLCAIHGATVQNTLFEDGD). A plastoquinone-binding residues include His213 and Phe260. Position 213 (His213) interacts with Fe cation. Residue His267 participates in Fe cation binding. The helical transmembrane segment at 277–293 (GLWTSAFGIVGLALNLR) threads the bilayer.

The protein belongs to the reaction center PufL/M/PsbA/D family. In terms of assembly, PSII is composed of 1 copy each of membrane proteins PsbA, PsbB, PsbC, PsbD, PsbE, PsbF, PsbH, PsbI, PsbJ, PsbK, PsbL, PsbM, PsbT, PsbX, PsbY, PsbZ, Psb30/Ycf12, at least 3 peripheral proteins of the oxygen-evolving complex and a large number of cofactors. It forms dimeric complexes. The D1/D2 heterodimer binds P680, chlorophylls that are the primary electron donor of PSII, and subsequent electron acceptors. It shares a non-heme iron and each subunit binds pheophytin, quinone, additional chlorophylls, carotenoids and lipids. There is also a Cl(-1) ion associated with D1 and D2, which is required for oxygen evolution. The PSII complex binds additional chlorophylls, carotenoids and specific lipids. is required as a cofactor.

It localises to the plastid. The protein localises to the chloroplast thylakoid membrane. The catalysed reaction is 2 a plastoquinone + 4 hnu + 2 H2O = 2 a plastoquinol + O2. Its function is as follows. Photosystem II (PSII) is a light-driven water:plastoquinone oxidoreductase that uses light energy to abstract electrons from H(2)O, generating O(2) and a proton gradient subsequently used for ATP formation. It consists of a core antenna complex that captures photons, and an electron transfer chain that converts photonic excitation into a charge separation. The D1/D2 (PsbA/PsbD) reaction center heterodimer binds P680, the primary electron donor of PSII as well as several subsequent electron acceptors. D2 is needed for assembly of a stable PSII complex. This Pyropia yezoensis (Susabi-nori) protein is Photosystem II D2 protein.